The following is a 358-amino-acid chain: Homoserine O-acetyltransferase (358 aa).

The region spanning 41 to 343 (NAVLICHALT…DYGHDAFLVD (303 aa)) is the AB hydrolase-1 domain. Serine 143 acts as the Nucleophile in catalysis. Arginine 212 contributes to the substrate binding site. Residues aspartate 304 and histidine 337 contribute to the active site. Aspartate 338 is a binding site for substrate.

As to quaternary structure, homodimer.

Its subcellular location is the cytoplasm. It catalyses the reaction L-homoserine + acetyl-CoA = O-acetyl-L-homoserine + CoA. It participates in amino-acid biosynthesis; L-methionine biosynthesis via de novo pathway; O-acetyl-L-homoserine from L-homoserine: step 1/1. Functionally, transfers an acetyl group from acetyl-CoA to L-homoserine, forming acetyl-L-homoserine. Utilizes a ping-pong kinetic mechanism in which the acetyl group of acetyl-CoA is initially transferred to the enzyme to form an acetyl-enzyme intermediate before subsequent transfer to homoserine to form the final product, O-acetylhomoserine. The sequence is that of Homoserine O-acetyltransferase from Haemophilus influenzae (strain ATCC 51907 / DSM 11121 / KW20 / Rd).